Reading from the N-terminus, the 162-residue chain is D-aminoacyl-tRNA deacylase (162 aa).

Positions 145 to 146 (GP) match the Gly-cisPro motif, important for rejection of L-amino acids motif.

Belongs to the DTD family. As to quaternary structure, homodimer.

It is found in the cytoplasm. It catalyses the reaction glycyl-tRNA(Ala) + H2O = tRNA(Ala) + glycine + H(+). The catalysed reaction is a D-aminoacyl-tRNA + H2O = a tRNA + a D-alpha-amino acid + H(+). An aminoacyl-tRNA editing enzyme that deacylates mischarged D-aminoacyl-tRNAs. Also deacylates mischarged glycyl-tRNA(Ala), protecting cells against glycine mischarging by AlaRS. Acts via tRNA-based rather than protein-based catalysis; rejects L-amino acids rather than detecting D-amino acids in the active site. By recycling D-aminoacyl-tRNA to D-amino acids and free tRNA molecules, this enzyme counteracts the toxicity associated with the formation of D-aminoacyl-tRNA entities in vivo and helps enforce protein L-homochirality. In Bifidobacterium longum (strain DJO10A), this protein is D-aminoacyl-tRNA deacylase.